Consider the following 713-residue polypeptide: tRNA 5-methylaminomethyl-2-thiouridine biosynthesis bifunctional protein MnmC (713 aa).

Residues 1–300 (MTAEPNKPCQ…MAAILSSATP (300 aa)) are tRNA (mnm(5)s(2)U34)-methyltransferase. The tract at residues 306–713 (IGGGLASAHL…LRKLLKGKAL (408 aa)) is FAD-dependent cmnm(5)s(2)U34 oxidoreductase.

In the N-terminal section; belongs to the methyltransferase superfamily. tRNA (mnm(5)s(2)U34)-methyltransferase family. This sequence in the C-terminal section; belongs to the DAO family. FAD serves as cofactor.

The protein resides in the cytoplasm. It catalyses the reaction 5-aminomethyl-2-thiouridine(34) in tRNA + S-adenosyl-L-methionine = 5-methylaminomethyl-2-thiouridine(34) in tRNA + S-adenosyl-L-homocysteine + H(+). Its function is as follows. Catalyzes the last two steps in the biosynthesis of 5-methylaminomethyl-2-thiouridine (mnm(5)s(2)U) at the wobble position (U34) in tRNA. Catalyzes the FAD-dependent demodification of cmnm(5)s(2)U34 to nm(5)s(2)U34, followed by the transfer of a methyl group from S-adenosyl-L-methionine to nm(5)s(2)U34, to form mnm(5)s(2)U34. This is tRNA 5-methylaminomethyl-2-thiouridine biosynthesis bifunctional protein MnmC from Shewanella baltica (strain OS155 / ATCC BAA-1091).